The following is a 540-amino-acid chain: MSILALVEDRPTPKEVYNWRIYLLAAVASFTSCMIGYDSAFIGTTLALGSFREEFEFTTMEPAAVNRVSANIVSCYQAGAFFGAFFAYPIGHFWGRKWGLLSAAAIFTLGAGLMLGANGDRGLGLIYGGRVLAGIGVGAGSNITPIYISELAPPSIRGHLVGVYELGWQIGGLVGFWINYGVSETLAPSHKQWIIPFAVQLIPSGLLLIGAVFLRESPRWLFSSDRREEAIENLCWIRQLPADHIYMIEEIGAIDQALEEQRSTIGLGFWKPFKAAGTNKKVMYRLFLGSMLFFWQNGSGINAINYYSPTVFKSIGLRGTNTGMFSTGIFGVVKTVVTFIWLLYLIDRMGRRLLLLVGAAGASVCLWIVGAYIKIANPAKNGNGEMTGGGIAAMFFFYLYTVFYTPSWNGTPWVMNSEMFEPNMRSLAQACAAASNWLWNFLISRFTPQMFDKMGYGVWFFFASLMLCSIVIVFFLIPETKGIPLESMDALFETKPIWRAHGIVLAKLREDEEQFRQDIEESGYTKSGEQRLESVQPKEA.

Topologically, residues 1–22 are cytoplasmic; it reads MSILALVEDRPTPKEVYNWRIY. A helical membrane pass occupies residues 23–43; it reads LLAAVASFTSCMIGYDSAFIG. Topologically, residues 44–74 are extracellular; the sequence is TTLALGSFREEFEFTTMEPAAVNRVSANIVS. The chain crosses the membrane as a helical span at residues 75-95; sequence CYQAGAFFGAFFAYPIGHFWG. Topologically, residues 96–97 are cytoplasmic; that stretch reads RK. The chain crosses the membrane as a helical span at residues 98–118; that stretch reads WGLLSAAAIFTLGAGLMLGAN. The Extracellular portion of the chain corresponds to 119 to 130; sequence GDRGLGLIYGGR. Residues 131–151 traverse the membrane as a helical segment; it reads VLAGIGVGAGSNITPIYISEL. At 152-157 the chain is on the cytoplasmic side; it reads APPSIR. A helical transmembrane segment spans residues 158–178; sequence GHLVGVYELGWQIGGLVGFWI. The Extracellular portion of the chain corresponds to 179-193; the sequence is NYGVSETLAPSHKQW. Residues 194-214 traverse the membrane as a helical segment; that stretch reads IIPFAVQLIPSGLLLIGAVFL. The Cytoplasmic segment spans residues 215 to 285; it reads RESPRWLFSS…AGTNKKVMYR (71 aa). The chain crosses the membrane as a helical span at residues 286 to 306; that stretch reads LFLGSMLFFWQNGSGINAINY. The Extracellular segment spans residues 307–325; the sequence is YSPTVFKSIGLRGTNTGMF. Residues 326–346 form a helical membrane-spanning segment; it reads STGIFGVVKTVVTFIWLLYLI. Residues 347–352 lie on the Cytoplasmic side of the membrane; it reads DRMGRR. A helical membrane pass occupies residues 353–373; the sequence is LLLLVGAAGASVCLWIVGAYI. Residues 374 to 387 lie on the Extracellular side of the membrane; the sequence is KIANPAKNGNGEMT. A helical membrane pass occupies residues 388 to 408; that stretch reads GGGIAAMFFFYLYTVFYTPSW. Topologically, residues 409 to 456 are cytoplasmic; the sequence is NGTPWVMNSEMFEPNMRSLAQACAAASNWLWNFLISRFTPQMFDKMGY. The chain crosses the membrane as a helical span at residues 457–477; the sequence is GVWFFFASLMLCSIVIVFFLI. Over 478–540 the chain is Extracellular; the sequence is PETKGIPLES…RLESVQPKEA (63 aa). Residues 519-540 are disordered; the sequence is IEESGYTKSGEQRLESVQPKEA. A compositionally biased stretch (basic and acidic residues) spans 528–540; the sequence is GEQRLESVQPKEA.

The protein belongs to the major facilitator superfamily. Sugar transporter (TC 2.A.1.1) family. Interacts with creB. Post-translationally, ubiquitinated. Deubiquitinated by creB, probably to control its activity or amount.

It localises to the cell membrane. In terms of biological role, integral membrane transporter that imports quinic acid to be catabolized as a carbon source. This is Probable quinate permease (qutD) from Aspergillus clavatus (strain ATCC 1007 / CBS 513.65 / DSM 816 / NCTC 3887 / NRRL 1 / QM 1276 / 107).